The following is a 247-amino-acid chain: Probable transcriptional regulatory protein HRM2_04000 (247 aa).

It belongs to the TACO1 family.

The protein localises to the cytoplasm. This Desulforapulum autotrophicum (strain ATCC 43914 / DSM 3382 / VKM B-1955 / HRM2) (Desulfobacterium autotrophicum) protein is Probable transcriptional regulatory protein HRM2_04000.